A 653-amino-acid chain; its full sequence is MLSQNPTTVAWWSVRMRATGTLDDEPYHVSGAESLVAPGMIEQTVAGLTQRALAPGHTVKARQVRVSLDQLDVEPTIIPALPTELKECPDPVAARQYFVDVLSRFVPHPAEALRVLTEGPTMRGAAMVEAGTDRRLEADPLRGVRVTKFGDLTESAPGASLAHKKHHHEAVLLASKVAAAPGVLAEFCISDDPHYTRGYVCVDGVYTTVTNVKADGDPNGGRVILVDTARADPTTITTWLENHPVLIGPATASSQKATSWHGHLCGRLNAWRAAGLERRPRTFCSAQDPDAVTTDGPALLFSSSDYLGLSTEPKVQQAMNNTVRRLGSSSGGSRLTTGTSVAHHQAEHEIAAWLGYPQAVFMASGYQANIATIQLLADPHVTVISDAENHASLIDGCRLARARTVVVPHADLDAIDTALDCVTTDRALVLTEGVYSMGGDVAPVGELVEIAHRHGALVVVDDAHGIGTVGPTGRGATEELPASQRPDVLLGTASKALGVEGGFACVDETLATLMRNCARGYVFSSAPSPVVAAGVAAAVEYLRTDTRRVCSLQANVAQARLLLAEADLIPPSAAHDRGPIIRIPVGPESRAVAAQEELARRGLMVGAIRYPAVARGDAILRICLTARHTDEHIRILVTSLREVLDGALSDAPR.

Substrate is bound at residue Arg-278. Position 365 to 366 (365 to 366) interacts with pyridoxal 5'-phosphate; it reads GY. His-390 is a substrate binding site. Pyridoxal 5'-phosphate is bound by residues Ser-436, 461-464, and 492-495; these read DDAH and TASK. N6-(pyridoxal phosphate)lysine is present on Lys-495.

The protein in the N-terminal section; belongs to the BioW family. It in the C-terminal section; belongs to the class-II pyridoxal-phosphate-dependent aminotransferase family. BioF subfamily. Homodimer. Mg(2+) is required as a cofactor. It depends on pyridoxal 5'-phosphate as a cofactor.

The enzyme catalyses heptanedioate + ATP + CoA = 6-carboxyhexanoyl-CoA + AMP + diphosphate. It carries out the reaction 6-carboxyhexanoyl-[ACP] + L-alanine + H(+) = (8S)-8-amino-7-oxononanoate + holo-[ACP] + CO2. The protein operates within metabolic intermediate metabolism; pimeloyl-CoA biosynthesis; pimeloyl-CoA from pimelate: step 1/1. Its pathway is cofactor biosynthesis; biotin biosynthesis. In terms of biological role, catalyzes both the decarboxylative condensation of pimeloyl-[acyl-carrier protein] and L-alanine to produce 8-amino-7-oxononanoate (AON), [acyl-carrier protein], and carbon dioxide, and the transformation of pimelate into pimeloyl-CoA with concomitant hydrolysis of ATP to AMP. This is Biotin biosynthesis bifunctional protein BioWF from Cutibacterium acnes (strain DSM 16379 / KPA171202) (Propionibacterium acnes).